We begin with the raw amino-acid sequence, 943 residues long: WD repeat-containing protein 3 (943 aa).

5 WD repeats span residues 21 to 60 (SQKGNIVFVTLRGEKGRYVAVPACEHVFIWDLRKGEKILI), 63 to 102 (GLKQEVTCLCPSPDGLHLAVGYEDGSIRIFSLLSGEGNVT), 105 to 144 (GHKAAITTLKYDQLGGRLASGSKDTDIIVWDVINESGLYR), 147 to 186 (GHKDAITQALFLREKNLLVTSGKDTMVKWWDLDTQHCFKT), and 189 to 228 (GHRTEVWGLVLLSEEKRLITGASDSELRVWDIAYLQEIED). Ser240 and Ser241 each carry phosphoserine. Residue Thr257 is modified to Phosphothreonine. Residues 277-316 (EGRDRVVNLAVDKTGRILACHGTDSVLELFCILSKKEIQK) form a WD 6 repeat. The interval 326–345 (RKKAKLHSSKGEEEDPEVNV) is disordered. 7 WD repeats span residues 413 to 451 (GHRSDVRTLSFSSDNIAVLSAAADSIKIWNRSTLQCIRT), 453 to 493 (TCEY…ETID), 494 to 533 (AHDGALWSMSLSPDQRGFVTGGADKSVKFWDFELVKDENS), 547 to 586 (QLDEDVLCVSYSPNQKLLAVSLLDCTVKIFYVDTLKFFLS), 589 to 630 (GHKL…KSLF), 631 to 670 (AHDDSVMYLQFVPKSHLFFTAGKDHKIKQWDADKFEHIQT), and 673 to 712 (GHHQEIWCLAVSPSGDYVVSSSHDKSLRLWERTREPLILE). Glycyl lysine isopeptide (Lys-Gly) (interchain with G-Cter in SUMO2) cross-links involve residues Lys474 and Lys529. A Phosphoserine modification is found at Ser726.

The protein belongs to the WD repeat WDR3/UTP12 family. Part of the small subunit (SSU) processome, composed of more than 70 proteins and the RNA chaperone small nucleolar RNA (snoRNA) U3. As to expression, ubiquitous.

Its subcellular location is the nucleus. It is found in the nucleolus. Part of the small subunit (SSU) processome, first precursor of the small eukaryotic ribosomal subunit. During the assembly of the SSU processome in the nucleolus, many ribosome biogenesis factors, an RNA chaperone and ribosomal proteins associate with the nascent pre-rRNA and work in concert to generate RNA folding, modifications, rearrangements and cleavage as well as targeted degradation of pre-ribosomal RNA by the RNA exosome. In Homo sapiens (Human), this protein is WD repeat-containing protein 3.